The following is a 412-amino-acid chain: Light-independent protochlorophyllide reductase subunit N (412 aa).

Residues Cys17, Cys42, and Cys103 each coordinate [4Fe-4S] cluster.

Belongs to the BchN/ChlN family. Protochlorophyllide reductase is composed of three subunits; ChlL, ChlN and ChlB. Forms a heterotetramer of two ChlB and two ChlN subunits. It depends on [4Fe-4S] cluster as a cofactor.

The catalysed reaction is chlorophyllide a + oxidized 2[4Fe-4S]-[ferredoxin] + 2 ADP + 2 phosphate = protochlorophyllide a + reduced 2[4Fe-4S]-[ferredoxin] + 2 ATP + 2 H2O. It participates in porphyrin-containing compound metabolism; chlorophyll biosynthesis (light-independent). Its function is as follows. Component of the dark-operative protochlorophyllide reductase (DPOR) that uses Mg-ATP and reduced ferredoxin to reduce ring D of protochlorophyllide (Pchlide) to form chlorophyllide a (Chlide). This reaction is light-independent. The NB-protein (ChlN-ChlB) is the catalytic component of the complex. The polypeptide is Light-independent protochlorophyllide reductase subunit N (Synechococcus sp. (strain CC9902)).